The chain runs to 426 residues: L-ascorbate peroxidase T, chloroplastic (426 aa).

The Proton acceptor role is filled by His-112. His-241 lines the heme b pocket. Thr-242 contributes to the K(+) binding site. A disordered region spans residues 245–269 (RARPDRSGWGKPETKYTKTGPGEAG). Over residues 246–260 (ARPDRSGWGKPETKY) the composition is skewed to basic and acidic residues. K(+) is bound by residues Thr-274 and Asp-281. The helical transmembrane segment at 397–417 (YFLNIIIAIGVLVLLSTLFGG) threads the bilayer.

This sequence belongs to the peroxidase family. Ascorbate peroxidase subfamily. Requires heme b as cofactor.

It is found in the plastid. The protein localises to the chloroplast thylakoid membrane. It carries out the reaction L-ascorbate + H2O2 = L-dehydroascorbate + 2 H2O. Plays a key role in hydrogen peroxide removal. This Arabidopsis thaliana (Mouse-ear cress) protein is L-ascorbate peroxidase T, chloroplastic (APXT).